Here is a 497-residue protein sequence, read N- to C-terminus: Zinc finger protein ZIC 2-B (497 aa).

Disordered stretches follow at residues 58–107 (HMGA…TSQA) and 143–180 (SAAA…PQGH). The span at 66–88 (PGGGSGGGSGGGGGAGPNGGAGA) shows a compositional bias: gly residues. Polar residues predominate over residues 97 to 107 (PGQTSAFTSQA). Basic residues predominate over residues 161-171 (LHHHPHHHHQL). Residues 273–308 (LICKWIDPEQLNNPKKSCNKTFSTMHELVTHMSVEH) form a C2H2-type 1; atypical zinc finger. The segment at 317-344 (HICFWEECAREGKPFKAKYKLVNHIRVH) adopts a C2H2-type 2; atypical zinc-finger fold. C2H2-type zinc fingers lie at residues 350–374 (FPCP…KRTH), 380–404 (FQCE…MHVH), and 410–432 (YLCK…MKVH). Residues 423–473 (SSLRKHMKVHESSPQGSESSPAASSGYESSTPPGLVSPNSETQNPNLSPAA) form a disordered region. The span at 434 to 452 (SSPQGSESSPAASSGYESS) shows a compositional bias: low complexity. A compositionally biased stretch (polar residues) spans 459-469 (SPNSETQNPNL).

This sequence belongs to the GLI C2H2-type zinc-finger protein family.

The protein resides in the nucleus. It localises to the cytoplasm. Its function is as follows. Transcriptional repressor that inhibits neurogenesis and induces neural and neural crest differentiation. Regulates anteroposterior patterning in early development by inhibiting expression of the nodal genes through the inhibition of vegt. Required for gastrulation movements and for proper anterior neural and axial development. May also act as a transcriptional activator. May bind to the minimal GLI-consensus sequence 5'-TGGGTGGTC-3'. The sequence is that of Zinc finger protein ZIC 2-B (zic2-b) from Xenopus laevis (African clawed frog).